The primary structure comprises 579 residues: O-fucosyltransferase 24 (579 aa).

The chain crosses the membrane as a helical; Signal-anchor for type II membrane protein span at residues 58–78; sequence LWAFSLFLLSILGISLRLGLC. N-linked (GlcNAc...) asparagine glycosylation is present at N133. Residue 355-357 coordinates substrate; sequence HLR. N-linked (GlcNAc...) asparagine glycosylation is found at N528, N573, and N576.

The protein belongs to the glycosyltransferase GT106 family.

The protein localises to the membrane. It functions in the pathway glycan metabolism. The chain is O-fucosyltransferase 24 from Arabidopsis thaliana (Mouse-ear cress).